The chain runs to 407 residues: Proteasome-activating nucleotidase (407 aa).

Positions 22 to 67 (KEKTQIAELESKVLRLELKNKDINRENVQIKKENEILKRELDKLRI) form a coiled coil. ATP is bound by residues 192–197 (GTGKTL) and histidine 331. A docks into pockets in the proteasome alpha-ring to cause gate opening region spans residues 405 to 407 (MYG).

The protein belongs to the AAA ATPase family. As to quaternary structure, homohexamer. The hexameric complex has a two-ring architecture resembling a top hat that caps the 20S proteasome core at one or both ends. Upon ATP-binding, the C-terminus of PAN interacts with the alpha-rings of the proteasome core by binding to the intersubunit pockets.

Its subcellular location is the cytoplasm. Functionally, ATPase which is responsible for recognizing, binding, unfolding and translocation of substrate proteins into the archaeal 20S proteasome core particle. Is essential for opening the gate of the 20S proteasome via an interaction with its C-terminus, thereby allowing substrate entry and access to the site of proteolysis. Thus, the C-termini of the proteasomal ATPase function like a 'key in a lock' to induce gate opening and therefore regulate proteolysis. Unfolding activity requires energy from ATP hydrolysis, whereas ATP binding alone promotes ATPase-20S proteasome association which triggers gate opening, and supports translocation of unfolded substrates. The protein is Proteasome-activating nucleotidase of Methanococcus maripaludis (strain DSM 14266 / JCM 13030 / NBRC 101832 / S2 / LL).